Reading from the N-terminus, the 198-residue chain is Transcription factor FapR (198 aa).

Positions 102–168 (TRIARGHHLF…GRTVVDVNSY (67 aa)) constitute a MaoC-like domain.

Belongs to the FapR family.

Transcriptional factor involved in regulation of membrane lipid biosynthesis by repressing genes involved in fatty acid and phospholipid metabolism. In Geobacillus thermodenitrificans (strain NG80-2), this protein is Transcription factor FapR.